Here is a 305-residue protein sequence, read N- to C-terminus: Insulin-like growth factor-binding protein 2 (305 aa).

A signal peptide spans 1–34 (MLPRLGGPALPLLLPSLLLLLLLGAGGCGPGVRA). The IGFBP N-terminal domain occupies 36–118 (VLFRCPPCTP…VTGAGTCEKR (83 aa)). 9 cysteine pairs are disulfide-bonded: cysteine 40–cysteine 68, cysteine 43–cysteine 70, cysteine 51–cysteine 71, cysteine 59–cysteine 74, cysteine 82–cysteine 95, cysteine 89–cysteine 115, cysteine 207–cysteine 241, cysteine 252–cysteine 263, and cysteine 265–cysteine 286. The 83-residue stretch at 204–286 (RTPCQQELDQ…APTIRGDPEC (83 aa)) folds into the Thyroglobulin type-1 domain. The short motif at 281–283 (RGD) is the Cell attachment site element.

Interacts with IGF1. Interacts with IGF2. Interacts (via RGD motif) with integrin alpha5/ITGA5; this interaction induces cell migration, adhesion or apoptosis according to the context. Interacts with PTPRB; this interaction leads to PTPRB dimerization and inactivation. In terms of processing, cleaved by MMP9 leading to release of free IGF2 from IGFBP2-IGF2 complex, which contributes to enhance the motility and the growth of astrocytes. O-glycosylated. In terms of tissue distribution, highly expressed in adult liver, but also in kidney, lung, brain, spleen, testis and ovary.

The protein resides in the secreted. In terms of biological role, multifunctional protein that plays a critical role in regulating the availability of IGFs such as IGF1 and IGF2 to their receptors and thereby regulates IGF-mediated cellular processes including proliferation, differentiation, and apoptosis in a cell-type specific manner. Functions coordinately with receptor protein tyrosine phosphatase beta/PTPRB and the IGF1 receptor to regulate IGF1-mediated signaling by stimulating the phosphorylation of PTEN leading to its inactivation and AKT1 activation. Plays a positive role in cell migration via interaction with integrin alpha5/ITGA5 through an RGD motif. Additionally, interaction with ITGA5/ITGB1 enhances the adhesion of endothelial progenitor cells to endothelial cells. Upon mitochondrial damage, facilitates apoptosis with ITGA5 of podocytes, and then activates the phosphorylation of focal adhesion kinase (FAK)-mediated mitochondrial injury. The chain is Insulin-like growth factor-binding protein 2 (Igfbp2) from Mus musculus (Mouse).